Reading from the N-terminus, the 1048-residue chain is Histone deacetylase complex subunit SAP130 (1048 aa).

The segment at 1-95 (MGPPRHPQAG…LQSREEKQEP (95 aa)) is disordered. Over residues 40–54 (TGLSQAPSQIANSGS) the composition is skewed to polar residues. The segment covering 67–80 (ESGRDSEVSAREHM) has biased composition (basic and acidic residues). The residue at position 232 (Arg232) is an Omega-N-methylarginine. Thr355 is subject to Phosphothreonine. Residues Ser442 and Ser465 each carry the phosphoserine modification. Disordered regions lie at residues 458–477 (PISG…RSDN), 576–617 (IGTP…PEGK), and 649–687 (QTHS…SEIH). Polar residues-rich tracts occupy residues 590–613 (GIHS…QQPQ) and 649–667 (QTHS…SSPR). Lys785 participates in a covalent cross-link: Glycyl lysine isopeptide (Lys-Gly) (interchain with G-Cter in SUMO2). Residues 819-871 (LSMPTSDLPPGASPRKKPRKQQHVISTEEGDMMETNSTDDEKSTAKSLLVKAE) form a disordered region. The segment at 836-1047 (PRKQQHVIST…KVSKLKRKEK (212 aa)) is interactions with SIN3A and HDAC1. Phosphoserine is present on Ser855. Thr856 bears the Phosphothreonine mark. Glycyl lysine isopeptide (Lys-Gly) (interchain with G-Cter in SUMO2) cross-links involve residues Lys864 and Lys869. Phosphoserine is present on Ser875.

The protein belongs to the SAP130 family. As to quaternary structure, component of a mSin3A corepressor complex that contains SIN3A, SAP130, SUDS3/SAP45, ARID4B/SAP180, HDAC1 and HDAC2. Interacts (released by dead or dying cells) with CLEC4E. Post-translationally, acetylated. Sumoylated with SUMO1. In terms of tissue distribution, expressed in various cancer cell ines.

The protein resides in the nucleus. Functionally, acts as a transcriptional repressor. May function in the assembly and/or enzymatic activity of the mSin3A corepressor complex or in mediating interactions between the complex and other regulatory complexes. This is Histone deacetylase complex subunit SAP130 (SAP130) from Homo sapiens (Human).